Consider the following 807-residue polypeptide: 85/88 kDa calcium-independent phospholipase A2 (807 aa).

Residue Ser13 is modified to Phosphoserine. ANK repeat units follow at residues Trp120–Thr147, Glu151–Val181, Lys185–Gln215, Gln219–Ile248, Pro251–Ser281, Tyr286–Ser312, Ser316–Ala345, His349–Thr378, and Phe382–Leu403. A run of 2 helical transmembrane segments spans residues Leu481–Ile501 and Leu512–Ser532. A PNPLA domain is found at Leu482–Met666. The short motif at Gly486–Gly491 is the GXGXXG element. Positions Gly518–Gly522 match the GXSXG motif. Ser520 functions as the Nucleophile in the catalytic mechanism. Asp653 (proton acceptor) is an active-site residue. The short motif at Asp653–Gly655 is the DGA/G element. Positions Arg678–Lys687 are calmodulin-binding (1-9-14 motif). Residues Ala749–Arg760 form a calmodulin-binding (IQ motif) region.

In terms of assembly, homodimer formed by catalytic domains tightly interacting through a large hydrophobic interface. The contact area involves 3 alpha helices, several loops and a part of the beta sheet from each monomer. Both active sites of the dimer are in close proximity adopting an open conformation that provide sufficient space for phospholipid access and favoring cooperativity in deacylation-reacylation reactions. Each monomer has 9 ankyrin repeats stacked side-by-side in an elongated structure oriented outwards from the catalytic core. As to expression, expressed in pancreatic beta-cells. Expressed in skeletal muscle (at protein level).

Its subcellular location is the cytoplasm. It localises to the cell membrane. It is found in the mitochondrion. The protein resides in the cell projection. The protein localises to the pseudopodium. It carries out the reaction a 1,2-diacyl-sn-glycero-3-phosphocholine + H2O = a 1-acyl-sn-glycero-3-phosphocholine + a fatty acid + H(+). The catalysed reaction is a 1-O-alkyl-2-acyl-sn-glycero-3-phosphocholine + H2O = a 1-O-alkyl-sn-glycero-3-phosphocholine + a fatty acid + H(+). It catalyses the reaction 1,2-dihexadecanoyl-sn-glycero-3-phosphocholine + H2O = 1-hexadecanoyl-sn-glycero-3-phosphocholine + hexadecanoate + H(+). The enzyme catalyses 1-hexadecanoyl-2-(9Z-octadecenoyl)-sn-glycero-3-phosphocholine + H2O = 1-hexadecanoyl-sn-glycero-3-phosphocholine + (9Z)-octadecenoate + H(+). It carries out the reaction 1-hexadecanoyl-2-(9Z,12Z-octadecadienoyl)-sn-glycero-3-phosphocholine + H2O = (9Z,12Z)-octadecadienoate + 1-hexadecanoyl-sn-glycero-3-phosphocholine + H(+). The catalysed reaction is 1-hexadecanoyl-2-(5Z,8Z,11Z,14Z-eicosatetraenoyl)-sn-glycero-3-phosphocholine + H2O = 1-hexadecanoyl-sn-glycero-3-phosphocholine + (5Z,8Z,11Z,14Z)-eicosatetraenoate + H(+). It catalyses the reaction 1-octadecanoyl-2-(5Z,8Z,11Z,14Z-eicosatetraenoyl)-sn-glycero-3-phosphocholine + H2O = 1-octadecanoyl-sn-glycero-3-phosphocholine + (5Z,8Z,11Z,14Z)-eicosatetraenoate + H(+). The enzyme catalyses 1-hexadecanoyl-2-(5Z,8Z,11Z,14Z-eicosatetraenoyl)-sn-glycero-3-phosphoethanolamine + H2O = 1-hexadecanoyl-sn-glycero-3-phosphoethanolamine + (5Z,8Z,11Z,14Z)-eicosatetraenoate + H(+). It carries out the reaction 1,2-dihexadecanoyl-sn-glycero-3-phosphate + H2O = 1-hexadecanoyl-sn-glycero-3-phosphate + hexadecanoate + H(+). The catalysed reaction is a 1-acyl-sn-glycero-3-phosphocholine + H2O = sn-glycerol 3-phosphocholine + a fatty acid + H(+). It catalyses the reaction 1-hexadecanoyl-sn-glycero-3-phosphocholine + H2O = sn-glycerol 3-phosphocholine + hexadecanoate + H(+). The enzyme catalyses 1-(5Z,8Z,11Z,14Z-eicosatetraenoyl)-sn-glycero-3-phosphocholine + H2O = sn-glycerol 3-phosphocholine + (5Z,8Z,11Z,14Z)-eicosatetraenoate + H(+). It carries out the reaction 2-(5Z,8Z,11Z,14Z)-eicosatetraenoyl-sn-glycero-3-phosphocholine + H2O = sn-glycerol 3-phosphocholine + (5Z,8Z,11Z,14Z)-eicosatetraenoate + H(+). The catalysed reaction is 1-O-hexadecyl-2-(5Z,8Z,11Z,14Z)-eicosatetraenoyl-sn-glycero-3-phosphocholine + H2O = 1-O-hexadecyl-sn-glycero-3-phosphocholine + (5Z,8Z,11Z,14Z)-eicosatetraenoate + H(+). It catalyses the reaction 1-O-hexadecyl-2-acetyl-sn-glycero-3-phosphocholine + H2O = 1-O-hexadecyl-sn-glycero-3-phosphocholine + acetate + H(+). The enzyme catalyses hexadecanoyl-CoA + H2O = hexadecanoate + CoA + H(+). It carries out the reaction 1',3'-bis[1,2-di-(9Z-octadecenoyl)-sn-glycero-3-phospho]-glycerol + H2O = 1'-[1,2-di-(9Z-octadecenoyl)-sn-glycero-3-phospho]-3'-[1-(9Z-octadecenoyl)-sn-glycero-3-phospho]-glycerol + (9Z)-octadecenoate + H(+). The catalysed reaction is 1'-[1,2-di-(9Z-octadecenoyl)-sn-glycero-3-phospho]-3'-[1-(9Z-octadecenoyl)-sn-glycero-3-phospho]-glycerol + H2O = 1',3'-bis-[1-(9Z-octadecenoyl)-sn-glycero-3-phospho]-glycerol + (9Z)-octadecenoate + H(+). It catalyses the reaction 1',3'-bis-[1,2-di-(9Z,12Z-octadecadienoyl)-sn-glycero-3-phospho]-glycerol + H2O = 1'-[1,2-di-(9Z,12Z-octadecadienoyl)-sn-glycero-3-phospho]-3'-[1-(9Z,12Z-octadecadienoyl)-sn-glycero-3-phospho]-glycerol + (9Z,12Z)-octadecadienoate + H(+). The enzyme catalyses 1-octadecanoyl-2-(15-hydroxy-(5Z,8Z,11Z,13E)-eicosatetraenoyl)-sn-glycero-3-phosphoethanolamine + H2O = 1-octadecanoyl-sn-glycero-3-phosphoethanolamine + 15-hydroxy-(5Z,8Z,11Z,13E)-eicosatetraenoate + H(+). Its activity is regulated as follows. Activated by ATP. Inhibited by calcium-activated calmodulin. Inhibited by bromoenol lactone (BEL). Its function is as follows. Calcium-independent phospholipase involved in phospholipid remodeling with implications in cellular membrane homeostasis, mitochondrial integrity and signal transduction. Hydrolyzes the ester bond of the fatty acyl group attached at sn-1 or sn-2 position of phospholipids (phospholipase A1 and A2 activity respectively), producing lysophospholipids that are used in deacylation-reacylation cycles. Hydrolyzes both saturated and unsaturated long fatty acyl chains in various glycerophospholipid classes such as phosphatidylcholines, phosphatidylethanolamines and phosphatidates, with a preference for hydrolysis at sn-2 position. Can further hydrolyze lysophospholipids carrying saturated fatty acyl chains (lysophospholipase activity). Upon oxidative stress, contributes to remodeling of mitochondrial phospholipids in pancreatic beta cells, in a repair mechanism to reduce oxidized lipid content. Preferentially hydrolyzes oxidized polyunsaturated fatty acyl chains from cardiolipins, yielding monolysocardiolipins that can be reacylated with unoxidized fatty acyls to regenerate native cardiolipin species. Hydrolyzes oxidized glycerophosphoethanolamines present in pancreatic islets, releasing oxidized polyunsaturated fatty acids such as hydroxyeicosatetraenoates (HETEs). Has thioesterase activity toward fatty-acyl CoA releasing CoA-SH known to facilitate fatty acid transport and beta-oxidation in mitochondria particularly in skeletal muscle. Plays a role in regulation of membrane dynamics and homeostasis. Selectively hydrolyzes sn-2 arachidonoyl group in plasmalogen phospholipids, structural components of lipid rafts and myelin. Regulates F-actin polymerization at the pseudopods, which is required for both speed and directionality of MCP1/CCL2-induced monocyte chemotaxis. Targets membrane phospholipids to produce potent lipid signaling messengers. Generates lysophosphatidate (LPA, 1-acyl-glycerol-3-phosphate), which acts via G-protein receptors in various cell types. Has phospholipase A2 activity toward platelet-activating factor (PAF, 1-O-alkyl-2-acetyl-sn-glycero-3-phosphocholine), likely playing a role in inactivation of this potent pro-inflammatory signaling lipid. In response to glucose, amplifies calcium influx in pancreatic beta cells to promote INS secretion. This chain is 85/88 kDa calcium-independent phospholipase A2 (Pla2g6), found in Rattus norvegicus (Rat).